Here is a 71-residue protein sequence, read N- to C-terminus: MQVLVRDNNVDQALRALKKKMQREGIFREMKMRDYYEKPSQKRAREKAEAVRRVRKLARKRAQREGLVAAR.

The protein belongs to the bacterial ribosomal protein bS21 family.

In Rhizobium johnstonii (strain DSM 114642 / LMG 32736 / 3841) (Rhizobium leguminosarum bv. viciae), this protein is Small ribosomal subunit protein bS21B.